We begin with the raw amino-acid sequence, 1423 residues long: DNA-directed RNA polymerase subunit beta' (1423 aa).

Residues Cys70, Cys72, Cys85, and Cys88 each coordinate Zn(2+). Positions 461, 463, and 465 each coordinate Mg(2+). The Zn(2+) site is built by Cys809, Cys883, Cys890, and Cys893. A disordered region spans residues 1383 to 1423 (EEHAAELRQPVQADTGDDPLGAVVGESHGTDADAGDYLTEE).

This sequence belongs to the RNA polymerase beta' chain family. As to quaternary structure, the RNAP catalytic core consists of 2 alpha, 1 beta, 1 beta' and 1 omega subunit. When a sigma factor is associated with the core the holoenzyme is formed, which can initiate transcription. It depends on Mg(2+) as a cofactor. The cofactor is Zn(2+).

It catalyses the reaction RNA(n) + a ribonucleoside 5'-triphosphate = RNA(n+1) + diphosphate. Functionally, DNA-dependent RNA polymerase catalyzes the transcription of DNA into RNA using the four ribonucleoside triphosphates as substrates. This Rhizorhabdus wittichii (strain DSM 6014 / CCUG 31198 / JCM 15750 / NBRC 105917 / EY 4224 / RW1) (Sphingomonas wittichii) protein is DNA-directed RNA polymerase subunit beta'.